A 41-amino-acid polypeptide reads, in one-letter code: SPbeta prophage-derived uncharacterized protein YosF (41 aa).

In Bacillus subtilis (strain 168), this protein is SPbeta prophage-derived uncharacterized protein YosF (yosF).